The sequence spans 258 residues: MSFSSSALVFLVAGIYMSSESFHTEIIGGREVQPHSRPFMASIQYRGKHICGGVLIHPQWVLTAAHCYSRGHSPTVVLGAHSLSKNEPMKQTFEIKEFIPFSGFKSGTNDIMLIKLRTAAELNKHVQLLHLRSKNYIRDGTKCQVTGWGSTKPDVLTTSDTLQEVTVTIISRKRCNSQSYYNHKPVITKDMICAGDRRGEKDSCKGDSGGPLICKGVFHALVSGGYKCGISNKPGVYTLLTKKYQTWIKSKLAPSSAH.

Positions 1 to 23 (MSFSSSALVFLVAGIYMSSESFH) are cleaved as a signal peptide. Positions 24–25 (TE) are cleaved as a propeptide — activation peptide. The Peptidase S1 domain maps to 26-253 (IIGGREVQPH…YQTWIKSKLA (228 aa)). An intrachain disulfide couples C51 to C67. Catalysis depends on charge relay system residues H66 and D110. Cystine bridges form between C143–C214, C175–C193, and C204–C228. The active-site Charge relay system is the S208.

It belongs to the peptidase S1 family. Granzyme subfamily. In terms of tissue distribution, speen, lungs and liver non-parenchymal cells.

It is found in the cytoplasmic granule. The polypeptide is Granzyme K (Gzmk) (Rattus norvegicus (Rat)).